We begin with the raw amino-acid sequence, 277 residues long: Inositol monophosphatase 1 (277 aa).

Mg(2+) contacts are provided by Glu-70, Asp-90, Ile-92, and Asp-93. Residue Glu-70 participates in substrate binding. 92 to 95 serves as a coordination point for substrate; sequence IDGT. Residue Thr-168 is modified to Phosphothreonine. Substrate contacts are provided by residues 194-196, Glu-213, and Asp-220; that span reads GTA. Mg(2+) is bound at residue Asp-220.

Belongs to the inositol monophosphatase superfamily. In terms of assembly, homodimer. Mg(2+) serves as cofactor.

The protein localises to the cytoplasm. It catalyses the reaction a myo-inositol phosphate + H2O = myo-inositol + phosphate. It carries out the reaction 1D-myo-inositol 1-phosphate + H2O = myo-inositol + phosphate. The catalysed reaction is 1D-myo-inositol 2-phosphate + H2O = myo-inositol + phosphate. The enzyme catalyses 1D-myo-inositol 3-phosphate + H2O = myo-inositol + phosphate. It catalyses the reaction 1D-myo-inositol 4-phosphate + H2O = myo-inositol + phosphate. It carries out the reaction 1D-myo-inositol 5-phosphate + H2O = myo-inositol + phosphate. The catalysed reaction is 1D-myo-inositol 6-phosphate + H2O = myo-inositol + phosphate. The enzyme catalyses scyllo-inositol 1-phosphate + H2O = scyllo-inositol + phosphate. It catalyses the reaction alpha-D-galactose 1-phosphate + H2O = D-galactose + phosphate. It carries out the reaction alpha-D-glucose 1-phosphate + H2O = D-glucose + phosphate. The catalysed reaction is D-glucose 6-phosphate + H2O = D-glucose + phosphate. The enzyme catalyses beta-D-fructose 1-phosphate + H2O = D-fructose + phosphate. It catalyses the reaction glycerol 2-phosphate + H2O = glycerol + phosphate. It carries out the reaction adenosine 2'-phosphate + H2O = adenosine + phosphate. Its pathway is polyol metabolism; myo-inositol biosynthesis; myo-inositol from D-glucose 6-phosphate: step 2/2. Its activity is regulated as follows. Activity with myo-inositol monophosphates and D-galactose 1-phosphate is inhibited by Li(+), Ca(2+) and Mn(2+), but also by Mg(2+) at concentrations above 3 mM. In terms of biological role, phosphatase involved in the dephosphorylation of myo-inositol monophosphates to generate myo-inositol. Is also able to dephosphorylate scyllo-inositol-phosphate, myo-inositol 1,4-diphosphate, scyllo-inositol-1,3-diphosphate and scyllo-inositol-1,4-diphosphate. Also dephosphorylates in vitro other sugar-phosphates including D-galactose-1-phosphate, glucose-1-phosphate, glucose-6-phosphate, fructose-1-phosphate, beta-glycerophosphate and 2'-AMP. Responsible for the provision of inositol required for synthesis of phosphatidylinositols and polyphosphoinositides, and involved in maintaining normal brain function. Has been implicated as the pharmacological target for lithium (Li(+)) action in brain, which is used to treat bipolar affective disorder. Is equally active with 1D-myo-inositol 1-phosphate, 1D-myo-inositol 3-phosphate and D-galactose 1-phosphate. This chain is Inositol monophosphatase 1, found in Homo sapiens (Human).